An 806-amino-acid chain; its full sequence is Leucine--tRNA ligase (806 aa).

The 'HIGH' region signature appears at 40–51 (PYPSGQGLHVGH). The short motif at 578-582 (KMSKS) is the 'KMSKS' region element. K581 serves as a coordination point for ATP.

This sequence belongs to the class-I aminoacyl-tRNA synthetase family.

It localises to the cytoplasm. It catalyses the reaction tRNA(Leu) + L-leucine + ATP = L-leucyl-tRNA(Leu) + AMP + diphosphate. The protein is Leucine--tRNA ligase of Limosilactobacillus reuteri (strain DSM 20016) (Lactobacillus reuteri).